A 562-amino-acid chain; its full sequence is Formate--tetrahydrofolate ligase (562 aa).

Position 71–78 (71–78) interacts with ATP; sequence TPAGEGKS.

The protein belongs to the formate--tetrahydrofolate ligase family.

It catalyses the reaction (6S)-5,6,7,8-tetrahydrofolate + formate + ATP = (6R)-10-formyltetrahydrofolate + ADP + phosphate. The protein operates within one-carbon metabolism; tetrahydrofolate interconversion. This Bacillus cereus (strain G9842) protein is Formate--tetrahydrofolate ligase.